A 157-amino-acid chain; its full sequence is Transcription elongation factor GreA (157 aa).

The stretch at 47 to 75 (SGEYEDAKKAQALLEGRIRELKHLLSRAE) forms a coiled coil.

It belongs to the GreA/GreB family.

Functionally, necessary for efficient RNA polymerase transcription elongation past template-encoded arresting sites. The arresting sites in DNA have the property of trapping a certain fraction of elongating RNA polymerases that pass through, resulting in locked ternary complexes. Cleavage of the nascent transcript by cleavage factors such as GreA or GreB allows the resumption of elongation from the new 3'terminus. GreA releases sequences of 2 to 3 nucleotides. The chain is Transcription elongation factor GreA from Chloroflexus aggregans (strain MD-66 / DSM 9485).